The following is a 483-amino-acid chain: Altronate oxidoreductase (483 aa).

An NAD(+)-binding site is contributed by 18 to 29 (IIQFGEGNFLRA).

This sequence belongs to the mannitol dehydrogenase family. UxaB subfamily.

It catalyses the reaction D-altronate + NAD(+) = keto-D-tagaturonate + NADH + H(+). Its pathway is carbohydrate metabolism; pentose and glucuronate interconversion. This Escherichia coli O6:K15:H31 (strain 536 / UPEC) protein is Altronate oxidoreductase.